The following is a 1060-amino-acid chain: Protocadherin-1 (1060 aa).

The signal sequence occupies residues 1–57 (MDSGAGGRRCPEAALLILGPPRMEHLRHSPGPGGQRLLLPSMLLALLLLLAPSPGHA). Cadherin domains are found at residues 58-168 (TRVV…TPNF), 169-280 (ASPV…APKF), 281-387 (ERPS…APTI), 396-506 (THQD…APVF), 507-612 (TQSV…DPKF), 613-715 (MLSG…APYI), and 718-844 (PSNT…DPEY). Residues 58-852 (TRVVYKVPEE…EYERSKQRGN (795 aa)) lie on the Extracellular side of the membrane. Asn305 and Asn403 each carry an N-linked (GlcNAc...) asparagine glycan. N-linked (GlcNAc...) asparagine glycosylation is found at Asn618, Asn662, Asn813, and Asn818. A helical transmembrane segment spans residues 853–873 (ILFGVVAGVVAVALLIALAVL). Residues 874 to 1060 (VRYCRQREAK…HGAIWTEVWE (187 aa)) lie on the Cytoplasmic side of the membrane. A compositionally biased stretch (basic and acidic residues) spans 884-897 (SGYQAGKKETKDLY). The tract at residues 884–1045 (SGYQAGKKET…QPFQLSTPQP (162 aa)) is disordered. Residues 907 to 920 (KGNKSKGKKSKSPK) are compositionally biased toward basic residues. 4 positions are modified to phosphoserine: Ser918, Ser949, Ser962, and Ser984. The span at 973-986 (SPLPSIQLQPQSPS) shows a compositional bias: low complexity. Composition is skewed to polar residues over residues 1003–1024 (FVGT…SYRT) and 1033–1043 (QVGQPFQLSTP).

As to expression, highly expressed in the brain and neuro-glial cells.

It localises to the cell junction. Its subcellular location is the cell membrane. Functionally, may be involved in cell-cell interaction processes and in cell adhesion. In Homo sapiens (Human), this protein is Protocadherin-1 (PCDH1).